The chain runs to 455 residues: MALTMLNGLLIKDSSPPMLHQISKTPQLDAFNYQSCFMQDLFAHFPEVLFIHRTYNPRGKVLYTFLVDGPRVQVEGPLARAVYFAIPTNEDARGLAQMFQVFKKFNPAWERVNTILVDPHFLLLPTLTMEFPTAEVLLSAFHICKFLQGKFYQLPLEQPVQRLLLSSLQSTMCSATAGNLRKLYTLLNNCIPSSRLPELHSHWLLNDRIWLAHRWRSRAQSSRYFQSLEIMAHILSQFFGTTPFEKQGMASVFRYMQQNSSDKASLSLAETPQDSHTPSEASAENPNTEQLVEARIQHSLNAICTGPAAQLCLGELAVVQKSMHLIGSGSEKMSIQILEDTHTVQPQPPASCSCYFNQAFHLPCRHILAMLSARQQVLQPDMLPAQWTSGCASSLDSILGSKWSASLDKHLAVTLLTEEVGRLLQHCSEEEFERRYSTLRELADNWIGPYEQVQL.

Positions 264 to 288 (ASLSLAETPQDSHTPSEASAENPNT) are disordered. The segment at 333–375 (MSIQILEDTHTVQPQPPASCSCYFNQAFHLPCRHILAMLSARQ) adopts an SWIM-type zinc-finger fold.

This Mus musculus (Mouse) protein is Zinc finger SWIM domain-containing protein 1 (Zswim1).